Reading from the N-terminus, the 140-residue chain is uncharacterized protein (140 aa).

Asn36 carries N-linked (GlcNAc...) asparagine glycosylation. A helical transmembrane segment spans residues Leu91–Phe107. Over residues Gln113–Asn122 the composition is skewed to polar residues. The interval Gln113–Gln140 is disordered. The segment covering Thr131–Gln140 has biased composition (acidic residues).

The protein localises to the endoplasmic reticulum membrane. This is an uncharacterized protein from Saccharomyces cerevisiae (strain ATCC 204508 / S288c) (Baker's yeast).